The following is a 653-amino-acid chain: Serine/threonine-protein phosphatase with EF-hands 1 (653 aa).

Positions Ser16–Phe45 constitute an IQ domain. A catalytic region spans residues Ile121 to Lys455. The Mn(2+) site is built by Asp172, His174, Asp201, and Asn233. The Proton donor role is filled by His234. Mn(2+) is bound by residues His285 and His403. EF-hand domains lie at Ser483 to Leu518, Arg566 to His601, and Ile606 to Tyr641. 9 residues coordinate Ca(2+): Asp579, Asp581, Ser583, Glu590, Asp619, Asn621, Asp623, Ser625, and Glu630.

This sequence belongs to the PPP phosphatase family. The cofactor is Mn(2+). It depends on Mg(2+) as a cofactor. As to expression, detected in retina and retinal derived Y-79 retinoblastoma cells. Also found in fetal brain.

It carries out the reaction O-phospho-L-seryl-[protein] + H2O = L-seryl-[protein] + phosphate. It catalyses the reaction O-phospho-L-threonyl-[protein] + H2O = L-threonyl-[protein] + phosphate. Activated by calcium. In terms of biological role, may have a role in the recovery or adaptation response of photoreceptors. May have a role in development. This chain is Serine/threonine-protein phosphatase with EF-hands 1 (PPEF1), found in Homo sapiens (Human).